The chain runs to 124 residues: Putative C(50) carotenoid beta-cyclase subunit A (124 aa).

3 helical membrane passes run M1–D21, A34–V54, and F78–V98.

It belongs to the lycopene beta-cyclase family. May form a complex with LbtBC.

It localises to the cell membrane. It functions in the pathway carotenoid biosynthesis. In terms of biological role, involved in the biosynthesis of C(50) beta-cyclic carotenoids. May have C(50) carotenoid beta-cyclase activity and produce the C(50) beta-cyclic carotenoid C.p.450 from the C(50) carotenoid dihydrobisanhydrobacterioruberin (DH-BABR). This Dietzia sp. (strain CQ4) protein is Putative C(50) carotenoid beta-cyclase subunit A.